Here is a 472-residue protein sequence, read N- to C-terminus: ATP synthase subunit beta (472 aa).

156 to 163 lines the ATP pocket; the sequence is GGAGVGKT.

This sequence belongs to the ATPase alpha/beta chains family. F-type ATPases have 2 components, CF(1) - the catalytic core - and CF(0) - the membrane proton channel. CF(1) has five subunits: alpha(3), beta(3), gamma(1), delta(1), epsilon(1). CF(0) has three main subunits: a(1), b(2) and c(9-12). The alpha and beta chains form an alternating ring which encloses part of the gamma chain. CF(1) is attached to CF(0) by a central stalk formed by the gamma and epsilon chains, while a peripheral stalk is formed by the delta and b chains.

It is found in the cell membrane. It catalyses the reaction ATP + H2O + 4 H(+)(in) = ADP + phosphate + 5 H(+)(out). Functionally, produces ATP from ADP in the presence of a proton gradient across the membrane. The catalytic sites are hosted primarily by the beta subunits. The chain is ATP synthase subunit beta from Symbiobacterium thermophilum (strain DSM 24528 / JCM 14929 / IAM 14863 / T).